We begin with the raw amino-acid sequence, 260 residues long: Global transcriptional regulator CodY (260 aa).

The GAF domain stretch occupies residues 1–159; that stretch reads MPNLLEKTRK…SSTVVGIQLL (159 aa). The H-T-H motif DNA-binding region spans 207–226; that stretch reads ASVIADRIGITRSVIVNALR.

The protein belongs to the CodY family.

It localises to the cytoplasm. DNA-binding global transcriptional regulator which is involved in the adaptive response to starvation and acts by directly or indirectly controlling the expression of numerous genes in response to nutrient availability. During rapid exponential growth, CodY is highly active and represses genes whose products allow adaptation to nutrient depletion. The sequence is that of Global transcriptional regulator CodY from Streptococcus pyogenes serotype M3 (strain SSI-1).